The chain runs to 64 residues: Enteric beta-defensin (64 aa).

The first 26 residues, Met-1 to Ser-26, serve as a signal peptide directing secretion. Intrachain disulfides connect Cys-31–Cys-60, Cys-38–Cys-53, and Cys-43–Cys-61.

The protein belongs to the beta-defensin family. LAP/TAP subfamily. Inducibly expressed in enteric epithelial cells.

It is found in the secreted. Its function is as follows. Has antibacterial activity. This is Enteric beta-defensin (EBD) from Bos taurus (Bovine).